Here is a 126-residue protein sequence, read N- to C-terminus: Large ribosomal subunit protein bL17 (126 aa).

Belongs to the bacterial ribosomal protein bL17 family. As to quaternary structure, part of the 50S ribosomal subunit. Contacts protein L32.

In Nitrosococcus oceani (strain ATCC 19707 / BCRC 17464 / JCM 30415 / NCIMB 11848 / C-107), this protein is Large ribosomal subunit protein bL17.